The primary structure comprises 533 residues: T-complex protein 1 subunit delta (533 aa).

The interval 1-26 (MSAPAAAPAKVLPSRSDFDEKEKEKD) is disordered. A compositionally biased stretch (basic and acidic residues) spans 16–26 (SDFDEKEKEKD).

Belongs to the TCP-1 chaperonin family. In terms of assembly, heterooligomeric complex of about 850 to 900 kDa that forms two stacked rings, 12 to 16 nm in diameter.

The protein localises to the cytoplasm. Its function is as follows. Molecular chaperone; assists the folding of proteins upon ATP hydrolysis. Known to play a role, in vitro, in the folding of actin and tubulin. In Dictyostelium discoideum (Social amoeba), this protein is T-complex protein 1 subunit delta (cct4).